Here is a 1066-residue protein sequence, read N- to C-terminus: Elongation factor 3 (1066 aa).

HEAT repeat units follow at residues 112 to 149, 151 to 188, 192 to 229, 231 to 268, 269 to 306, and 312 to 353; these read FIFENVLNSLVEAMGDKEKAVQKASLETLKAFVRVMSP, AAQQVLKVVLHQARTAGKWQVKTGCVALLEEMVTACPE, ALMPEIIPVMTEVIWDTKTDVQKASRAALTKLCALISN, DIERFIPALINSLIHPVEEVPKTIQLLSATTFVQEVDS, ATLALMVPLLSRGLNERPTATKRKVAVIIDNMTKLVDN, and PFLG…VTGD. Thr418 is a binding site for ADP. 2 ABC transporter domains span residues 454–672 and 699–1015; these read EEGE…YAEL and IKMK…KKEE. Positions 735, 944, 947, and 973 each coordinate ADP. The segment at 997 to 1066 is disordered; the sequence is GHDWTESNSK…YDSADELEDL (70 aa). The span at 1042–1054 shows a compositional bias: basic residues; the sequence is RKAKKDRMARKKA.

It belongs to the ABC transporter superfamily. ABCF family. EF3 subfamily.

The protein localises to the cytoplasm. It localises to the cytosol. The catalysed reaction is ATP + H2O = ADP + phosphate + H(+). The protein operates within protein biosynthesis; polypeptide chain elongation. Its function is as follows. Ribosome-dependent ATPase that functions in cytoplasmic translation elongation. Required for the ATP-dependent release of deacylated tRNA from the ribosomal E-site during protein biosynthesis. Stimulates the eEF1A-dependent binding of aminoacyl-tRNA to the ribosomal A-site, which has reduced affinity for tRNA as long as the E-site is occupied. Assists translation termination by stimulating the release of nascent protein from the ribosome by release factors. The sequence is that of Elongation factor 3 from Mycosarcoma maydis (Corn smut fungus).